The chain runs to 141 residues: Hemoglobin subunit alpha-D (141 aa).

A Globin domain is found at 1–141 (MLTAEDKKLI…VAAVLAEKYR (141 aa)). Residues His-58 and His-87 each contribute to the heme b site.

It belongs to the globin family. As to quaternary structure, heterotetramer of two alpha-D chains and two beta chains. As to expression, red blood cells.

In terms of biological role, involved in oxygen transport from the lung to the various peripheral tissues. This chain is Hemoglobin subunit alpha-D (HBAD), found in Cairina moschata (Muscovy duck).